The chain runs to 481 residues: Ankyrin repeat, SAM and basic leucine zipper domain-containing protein 1 (481 aa).

Residues 1 to 16 (MASGGLRGLAVAGGGE) are compositionally biased toward gly residues. A disordered region spans residues 1-23 (MASGGLRGLAVAGGGESSDSEDD). A phosphoserine mark is found at Ser17, Ser18, and Ser20. ANK repeat units lie at residues 45 to 74 (EKNE…SVDS), 78 to 107 (YGWT…NASF), 110 to 144 (DKQT…DPNV), 148 to 177 (RLMT…EVNT), 181 to 210 (NGYT…NKML), and 214 to 243 (DGKI…PLEG). The SAM domain occupies 272-334 (SYTAFGDLEI…KILSALKELE (63 aa)).

Interacts with DDX4, PIWIL1, RANBP9 and TDRD1.

It is found in the cytoplasm. Its function is as follows. Plays a central role during spermatogenesis by repressing transposable elements and preventing their mobilization, which is essential for the germline integrity. Acts via the piRNA metabolic process, which mediates the repression of transposable elements during meiosis by forming complexes composed of piRNAs and Piwi proteins and governs the methylation and subsequent repression of transposons. Its association with pi-bodies suggests a participation in the primary piRNAs metabolic process. Required prior to the pachytene stage to facilitate the production of multiple types of piRNAs, including those associated with repeats involved in the regulation of retrotransposons. May act by mediating protein-protein interactions during germ cell maturation. This chain is Ankyrin repeat, SAM and basic leucine zipper domain-containing protein 1 (ASZ1), found in Microcebus murinus (Gray mouse lemur).